The following is a 178-amino-acid chain: Nucleoplasmin-3 (178 aa).

Alanine 2 carries the N-acetylalanine modification. A phosphoserine mark is found at serine 13 and serine 16. Arginine 27 is subject to Omega-N-methylarginine. The interval 141–178 (TMSNDVSEEESEEEEEDSDEEEVELCPILPAKKQGGRP) is disordered. Acidic residues predominate over residues 146 to 164 (VSEEESEEEEEDSDEEEVE). Phosphoserine is present on residues serine 147, serine 151, and serine 158.

It belongs to the nucleoplasmin family. Interacts with NPM (via N-terminus). Forms a pentamer with NPM at a ratio 4:1 (NPM3/NPM). Two pentamers form a decamer. In terms of processing, phosphorylated. Ubiquitous.

It is found in the nucleus. It localises to the nucleolus. Its function is as follows. Plays a role in the regulation of diverse cellular processes such as ribosome biogenesis, chromatin remodeling or protein chaperoning. Modulates the histone chaperone function and the RNA-binding activity of nucleolar phosphoprotein B23/NPM. Efficiently mediates chromatin remodeling when included in a pentamer containing NPM3 and NPM. This chain is Nucleoplasmin-3 (NPM3), found in Homo sapiens (Human).